The primary structure comprises 278 residues: Diaminopimelate epimerase (278 aa).

Residues N13, Q46, and N66 each coordinate substrate. The active-site Proton donor is C75. Substrate contacts are provided by residues 76–77 (GN), N159, N192, and 210–211 (ER). Residue C219 is the Proton acceptor of the active site. 220-221 (GT) lines the substrate pocket.

Belongs to the diaminopimelate epimerase family. In terms of assembly, homodimer.

The protein localises to the cytoplasm. The enzyme catalyses (2S,6S)-2,6-diaminopimelate = meso-2,6-diaminopimelate. Its pathway is amino-acid biosynthesis; L-lysine biosynthesis via DAP pathway; DL-2,6-diaminopimelate from LL-2,6-diaminopimelate: step 1/1. Its function is as follows. Catalyzes the stereoinversion of LL-2,6-diaminopimelate (L,L-DAP) to meso-diaminopimelate (meso-DAP), a precursor of L-lysine and an essential component of the bacterial peptidoglycan. This is Diaminopimelate epimerase from Laribacter hongkongensis (strain HLHK9).